The sequence spans 554 residues: Sesquiterpene synthase 14b (554 aa).

4 residues coordinate Mg(2+): D305, D309, D449, and E457. Residues 305-309 carry the DDXXD motif motif; sequence DDLYD.

Belongs to the terpene synthase family. Tpsa subfamily. The cofactor is Mg(2+). Mn(2+) serves as cofactor.

The enzyme catalyses (2E,6E)-farnesyl diphosphate = (E)-gamma-bisabolene + diphosphate. It carries out the reaction (2Z,6Z)-farnesyl diphosphate = (E)-gamma-bisabolene + diphosphate. It catalyses the reaction (2Z,6Z)-farnesyl diphosphate = (E)-alpha-bisabolene + diphosphate. The catalysed reaction is (2Z,6Z)-farnesyl diphosphate = (Z)-beta-farnesene + diphosphate. The enzyme catalyses (2E,6E)-farnesyl diphosphate = (E)-beta-farnesene + diphosphate. It carries out the reaction (2E,6E)-farnesyl diphosphate = (+)-thujopsene + diphosphate. It catalyses the reaction (2Z,6Z)-farnesyl diphosphate = (E)-beta-farnesene + diphosphate. The catalysed reaction is (2E,6E)-farnesyl diphosphate = (Z)-beta-farnesene + diphosphate. The enzyme catalyses (2Z,6Z)-farnesyl diphosphate = beta-acoradiene + diphosphate. It carries out the reaction (2Z,6Z)-farnesyl diphosphate = alpha-acoradiene + diphosphate. It catalyses the reaction (2Z,6Z)-farnesyl diphosphate = beta-bisabolene + diphosphate. The catalysed reaction is (2E,6E)-farnesyl diphosphate = (-)-alpha-cedrene + diphosphate. The enzyme catalyses (2E,6E)-farnesyl diphosphate = beta-bisabolene + diphosphate. It carries out the reaction (2E,6E)-farnesyl diphosphate = beta-acoradiene + diphosphate. It catalyses the reaction (2Z,6Z)-farnesyl diphosphate = (-)-alpha-cedrene + diphosphate. The catalysed reaction is (2E)-geranyl diphosphate = terpinolene + diphosphate. The enzyme catalyses (2E)-geranyl diphosphate = limonene + diphosphate. It carries out the reaction (2E)-geranyl diphosphate = beta-myrcene + diphosphate. The protein operates within secondary metabolite biosynthesis; terpenoid biosynthesis. Its function is as follows. Sesquiterpene synthase involved in the biosynthesis of volatile compounds. Mediates the conversion of (2E,6E)-farnesyl diphosphate ((EE)-FPP) into (+)-thujopsene, beta-bisabolene, alpha-cederene, beta-acoradiene, (E)-gamma-bisabolene, (Z)-alpha-bisabolene, (Z)-beta-farnesene and (E)-beta-farnesene, and of (2Z,6Z)-farnesyl diphosphate ((ZZ)-FPP) into (E)-gamma-bisabolene, (E)-alpha-bisabolene, (E)-beta-farnesene, (Z)-beta-farnesene, beta-bisabolene, beta-acoradiene and alpha-acoradiene. Can act with a low efficiency as a monoterpene synthase with geranyl diphosphate (GPP) as substrate, thus producing beta-myrcene, limonene and terpinolene. The sequence is that of Sesquiterpene synthase 14b from Solanum habrochaites (Wild tomato).